Here is a 162-residue protein sequence, read N- to C-terminus: NADH-quinone oxidoreductase subunit I 2 (162 aa).

4Fe-4S ferredoxin-type domains follow at residues 53–83 and 93–122; these read LRRY…IDSE and TRYD…ETRI. Cysteine 63, cysteine 66, cysteine 69, cysteine 73, cysteine 102, cysteine 105, cysteine 108, and cysteine 112 together coordinate [4Fe-4S] cluster.

This sequence belongs to the complex I 23 kDa subunit family. In terms of assembly, NDH-1 is composed of 14 different subunits. Subunits NuoA, H, J, K, L, M, N constitute the membrane sector of the complex. [4Fe-4S] cluster is required as a cofactor.

The protein localises to the cell inner membrane. It catalyses the reaction a quinone + NADH + 5 H(+)(in) = a quinol + NAD(+) + 4 H(+)(out). NDH-1 shuttles electrons from NADH, via FMN and iron-sulfur (Fe-S) centers, to quinones in the respiratory chain. The immediate electron acceptor for the enzyme in this species is believed to be ubiquinone. Couples the redox reaction to proton translocation (for every two electrons transferred, four hydrogen ions are translocated across the cytoplasmic membrane), and thus conserves the redox energy in a proton gradient. In Nitrosococcus oceani (strain ATCC 19707 / BCRC 17464 / JCM 30415 / NCIMB 11848 / C-107), this protein is NADH-quinone oxidoreductase subunit I 2.